The sequence spans 372 residues: tRNA-specific 2-thiouridylase MnmA 1 (372 aa).

Residues 26–33 and Met52 each bind ATP; that span reads AISGGVDS. Residue Cys118 is the Nucleophile of the active site. An intrachain disulfide couples Cys118 to Cys214. Residue Gly142 participates in ATP binding. The segment at 164–166 is interaction with tRNA; sequence KDQ. Cys214 functions as the Cysteine persulfide intermediate in the catalytic mechanism.

It belongs to the MnmA/TRMU family.

It is found in the cytoplasm. It carries out the reaction S-sulfanyl-L-cysteinyl-[protein] + uridine(34) in tRNA + AH2 + ATP = 2-thiouridine(34) in tRNA + L-cysteinyl-[protein] + A + AMP + diphosphate + H(+). In terms of biological role, catalyzes the 2-thiolation of uridine at the wobble position (U34) of tRNA, leading to the formation of s(2)U34. The chain is tRNA-specific 2-thiouridylase MnmA 1 from Syntrophus aciditrophicus (strain SB).